Here is an 874-residue protein sequence, read N- to C-terminus: Valine--tRNA ligase (874 aa).

Positions 1-10 (MTENSQQQPP) are enriched in polar residues. The tract at residues 1 to 23 (MTENSQQQPPASEPELPTQYAPA) is disordered. The 'HIGH' region motif lies at 57-67 (PNVTGSLHLGH). Residues 531–535 (KMSKS) carry the 'KMSKS' region motif. Lys534 is an ATP binding site. Residues 806–871 (IDIVAERKRL…ARIQAQLDRM (66 aa)) are a coiled coil.

Belongs to the class-I aminoacyl-tRNA synthetase family. ValS type 1 subfamily. As to quaternary structure, monomer.

The protein localises to the cytoplasm. It catalyses the reaction tRNA(Val) + L-valine + ATP = L-valyl-tRNA(Val) + AMP + diphosphate. In terms of biological role, catalyzes the attachment of valine to tRNA(Val). As ValRS can inadvertently accommodate and process structurally similar amino acids such as threonine, to avoid such errors, it has a 'posttransfer' editing activity that hydrolyzes mischarged Thr-tRNA(Val) in a tRNA-dependent manner. In Streptomyces avermitilis (strain ATCC 31267 / DSM 46492 / JCM 5070 / NBRC 14893 / NCIMB 12804 / NRRL 8165 / MA-4680), this protein is Valine--tRNA ligase.